Consider the following 246-residue polypeptide: Protein phosphatase PhpP (246 aa).

In terms of domain architecture, PPM-type phosphatase spans 2–240 (EISLLTDVGQ…DNITVALVSM (239 aa)). Mn(2+) is bound by residues aspartate 36, glycine 37, aspartate 192, and aspartate 231.

The protein belongs to the PP2C family. Mn(2+) serves as cofactor.

It localises to the cytoplasm. The enzyme catalyses O-phospho-L-seryl-[protein] + H2O = L-seryl-[protein] + phosphate. It catalyses the reaction O-phospho-L-threonyl-[protein] + H2O = L-threonyl-[protein] + phosphate. In terms of biological role, protein phosphatase able to dephosphorylate StkP-P and other phosphorylated protein substrates. PhpP and its cognate protein kinase StkP appear to constitute a functional signaling couple in vivo, PhpP's primary role being probably to control phosphorylation levels of StkP and of its targets. PhpP thus performs an essential control of StkP activity. Also dephosphorylates DivIVA in vivo. This Streptococcus pneumoniae serotype 2 (strain D39 / NCTC 7466) protein is Protein phosphatase PhpP (phpP).